The chain runs to 82 residues: Cytotoxin 10 (82 aa).

The first 22 residues, 1-22, serve as a signal peptide directing secretion; sequence MKTLLLTLVVVVTIVCLDLGYT. 4 disulfides stabilise this stretch: C25/C43, C36/C60, C64/C75, and C76/C81.

Belongs to the three-finger toxin family. Short-chain subfamily. Type IA cytotoxin sub-subfamily. As to quaternary structure, monomer in solution; Homodimer and oligomer in the presence of negatively charged lipids forming a pore with a size ranging between 20 and 30 Angstroms. In terms of tissue distribution, expressed by the venom gland.

The protein localises to the secreted. It localises to the target cell membrane. Functionally, shows cytolytic activity on many different cells by forming pore in lipid membranes. In vivo, increases heart rate or kills the animal by cardiac arrest. In addition, it binds to heparin with high affinity, interacts with Kv channel-interacting protein 1 (KCNIP1) in a calcium-independent manner, and binds to integrin alpha-V/beta-3 (ITGAV/ITGB3) with moderate affinity. The polypeptide is Cytotoxin 10 (Naja atra (Chinese cobra)).